The primary structure comprises 342 residues: Autoinducer 2 import system permease protein LsrC (342 aa).

Residues 1 to 13 (MLKFIQNNREITA) are Periplasmic-facing. The helical transmembrane segment at 14–34 (LLAVVLLFVLPGFLDRQYLSV) threads the bilayer. Residues 35–38 (QTLT) lie on the Cytoplasmic side of the membrane. The chain crosses the membrane as a helical span at residues 39-59 (MVYSSAQILILLAMGATLVML). At 60 to 69 (TRNIDVSVGS) the chain is on the periplasmic side. The chain crosses the membrane as a helical span at residues 70–90 (ITGMCAVLLGMLLNAGYSLPV). Topologically, residues 91–92 (AC) are cytoplasmic. The chain crosses the membrane as a helical span at residues 93 to 113 (VTTLLLGLLAGFFNGVLVAWL). Lys-114 is a topological domain (periplasmic). The chain crosses the membrane as a helical span at residues 115–135 (IPAIVATLGTLGLYRGIMLLW). Over 136 to 154 (TGGKWIEGLPAELKQLSAP) the chain is Cytoplasmic. The helical transmembrane segment at 155 to 175 (LLFGVSAIGWLTIILVAFMAW) threads the bilayer. At 176-212 (LLAKTAFGRSFYATGDNLQGARQLGVRTEAIRIVAFS) the chain is on the periplasmic side. The helical transmembrane segment at 213 to 233 (LNGCMAALAGIVFASQIGFIP) threads the bilayer. Over 234–251 (NQTGTGLEMKAIAACVLG) the chain is Cytoplasmic. A helical membrane pass occupies residues 252-272 (GISLLGGSGAIIGAVLGAWFL). At 273 to 283 (TQIDSVLVLLR) the chain is on the periplasmic side. A helical membrane pass occupies residues 284–304 (IPAWWNDFIAGLVLLAVLVFD). Over 305-342 (GRLRCALERNLRRQKYARFMTPPPSVKPASSGKKREAA) the chain is Cytoplasmic.

This sequence belongs to the binding-protein-dependent transport system permease family. AraH/RbsC subfamily. As to quaternary structure, the complex is composed of two ATP-binding proteins (LsrA), two transmembrane proteins (LsrC and LsrD) and a solute-binding protein (LsrB).

It localises to the cell inner membrane. Functionally, part of the ABC transporter complex LsrABCD involved in autoinducer 2 (AI-2) import. Probably responsible for the translocation of the substrate across the membrane. This Escherichia coli O9:H4 (strain HS) protein is Autoinducer 2 import system permease protein LsrC (lsrC).